Reading from the N-terminus, the 213-residue chain is Imidazole glycerol phosphate synthase subunit HisH (213 aa).

The region spanning 1-212 (MLAILDYKAG…HRYCTEAADA (212 aa)) is the Glutamine amidotransferase type-1 domain. Residue Cys79 is the Nucleophile of the active site. Catalysis depends on residues His187 and Glu189.

Heterodimer of HisH and HisF.

The protein resides in the cytoplasm. It catalyses the reaction 5-[(5-phospho-1-deoxy-D-ribulos-1-ylimino)methylamino]-1-(5-phospho-beta-D-ribosyl)imidazole-4-carboxamide + L-glutamine = D-erythro-1-(imidazol-4-yl)glycerol 3-phosphate + 5-amino-1-(5-phospho-beta-D-ribosyl)imidazole-4-carboxamide + L-glutamate + H(+). The enzyme catalyses L-glutamine + H2O = L-glutamate + NH4(+). It functions in the pathway amino-acid biosynthesis; L-histidine biosynthesis; L-histidine from 5-phospho-alpha-D-ribose 1-diphosphate: step 5/9. IGPS catalyzes the conversion of PRFAR and glutamine to IGP, AICAR and glutamate. The HisH subunit catalyzes the hydrolysis of glutamine to glutamate and ammonia as part of the synthesis of IGP and AICAR. The resulting ammonia molecule is channeled to the active site of HisF. The protein is Imidazole glycerol phosphate synthase subunit HisH of Nitratidesulfovibrio vulgaris (strain ATCC 29579 / DSM 644 / CCUG 34227 / NCIMB 8303 / VKM B-1760 / Hildenborough) (Desulfovibrio vulgaris).